We begin with the raw amino-acid sequence, 279 residues long: Protein gustavus (279 aa).

In terms of domain architecture, B30.2/SPRY spans 36–233 (PARIDILLDM…ITMRYIGGLD (198 aa)). Positions 234-279 (PEPLPLMDLCRRTIRQKIGRTNLEEHIQQLQLPLSMKTYLLYKNRR) constitute an SOCS box domain. The involved in binding to the Elongin BC complex stretch occupies residues 236 to 279 (PLPLMDLCRRTIRQKIGRTNLEEHIQQLQLPLSMKTYLLYKNRR).

This sequence belongs to the SPSB family. Interacts (via B30.2/SPRY domain) with vas; this interaction may be necessary for the transport of vas to the posterior pole of the oocyte. Interacts with Cul-5. May associate with the Elongin BC complex composed of Elongin-B and Elongin-C. As to expression, expressed in ovaries, primarily in nurse cells and oocytes (at protein level).

It is found in the cytoplasm. Its subcellular location is the nucleus. Its function is as follows. Involved in the localization of vas to the posterior pole of the oocyte. Required maternally in the germ line for efficient primordial germ cell formation. The protein is Protein gustavus (gus) of Drosophila melanogaster (Fruit fly).